The following is a 237-amino-acid chain: Ras-related protein Rab-33A (237 aa).

The GTP site is built by Asn46, Val47, Gly48, Lys49, Thr50, Cys51, Thr65, and Thr68. Residue Thr50 participates in Mg(2+) binding. The Switch 1 signature appears at 59–71 (GTFPDKTEATIGV). Mg(2+) contacts are provided by Thr68 and Asp91. A Switch 2 motif is present at residues 92-111 (TAGQERFRKSMVEHYYRNVH). GTP is bound by residues Gly94, Asn151, Lys152, Asp154, Ala182, and Lys183. 2 S-geranylgeranyl cysteine lipidation sites follow: Cys235 and Cys237. The residue at position 237 (Cys237) is a Cysteine methyl ester.

Belongs to the small GTPase superfamily. Rab family. Interacts with ATG16L1; the interaction is important for autophagosome formation. It depends on Mg(2+) as a cofactor. In terms of tissue distribution, expressed predominantly in brain. Weak expression in ovary.

It is found in the cell membrane. The catalysed reaction is GTP + H2O = GDP + phosphate + H(+). Its activity is regulated as follows. Regulated by guanine nucleotide exchange factors (GEFs) which promote the exchange of bound GDP for free GTP. Regulated by GTPase activating proteins (GAPs) which increase the GTP hydrolysis activity. Inhibited by GDP dissociation inhibitors (GDIs). Functionally, the small GTPases Rab are key regulators of intracellular membrane trafficking, from the formation of transport vesicles to their fusion with membranes. Rabs cycle between an inactive GDP-bound form and an active GTP-bound form that is able to recruit to membranes different sets of downstream effectors directly responsible for vesicle formation, movement, tethering and fusion. Modulates autophagosome formation through interaction with ATG16L1. In Mus musculus (Mouse), this protein is Ras-related protein Rab-33A.